The sequence spans 367 residues: Probable butyrate kinase (367 aa).

Belongs to the acetokinase family.

It localises to the cytoplasm. The catalysed reaction is butanoate + ATP = butanoyl phosphate + ADP. The sequence is that of Probable butyrate kinase from Bacillus cereus (strain ZK / E33L).